The chain runs to 344 residues: Methionine import ATP-binding protein MetN 1 (344 aa).

Residues 2-241 enclose the ABC transporter domain; it reads IELRNLSQRF…PHHEVTRALI (240 aa). 38 to 45 serves as a coordination point for ATP; sequence GRSGAGKS.

Belongs to the ABC transporter superfamily. Methionine importer (TC 3.A.1.24) family. The complex is composed of two ATP-binding proteins (MetN), two transmembrane proteins (MetI) and a solute-binding protein (MetQ).

It localises to the cell inner membrane. The enzyme catalyses L-methionine(out) + ATP + H2O = L-methionine(in) + ADP + phosphate + H(+). It carries out the reaction D-methionine(out) + ATP + H2O = D-methionine(in) + ADP + phosphate + H(+). Its function is as follows. Part of the ABC transporter complex MetNIQ involved in methionine import. Responsible for energy coupling to the transport system. The protein is Methionine import ATP-binding protein MetN 1 of Burkholderia lata (strain ATCC 17760 / DSM 23089 / LMG 22485 / NCIMB 9086 / R18194 / 383).